The primary structure comprises 329 residues: 4-hydroxy-3-methylbut-2-enyl diphosphate reductase (329 aa).

Cysteine 27 is a binding site for [4Fe-4S] cluster. (2E)-4-hydroxy-3-methylbut-2-enyl diphosphate-binding residues include histidine 56 and histidine 89. Dimethylallyl diphosphate-binding residues include histidine 56 and histidine 89. Histidine 56 and histidine 89 together coordinate isopentenyl diphosphate. Position 111 (cysteine 111) interacts with [4Fe-4S] cluster. (2E)-4-hydroxy-3-methylbut-2-enyl diphosphate is bound at residue histidine 139. Position 139 (histidine 139) interacts with dimethylallyl diphosphate. An isopentenyl diphosphate-binding site is contributed by histidine 139. Glutamate 141 functions as the Proton donor in the catalytic mechanism. Threonine 179 contributes to the (2E)-4-hydroxy-3-methylbut-2-enyl diphosphate binding site. Residue cysteine 209 participates in [4Fe-4S] cluster binding. (2E)-4-hydroxy-3-methylbut-2-enyl diphosphate contacts are provided by serine 237, serine 238, asparagine 239, and serine 281. Serine 237, serine 238, asparagine 239, and serine 281 together coordinate dimethylallyl diphosphate. 4 residues coordinate isopentenyl diphosphate: serine 237, serine 238, asparagine 239, and serine 281.

Belongs to the IspH family. [4Fe-4S] cluster is required as a cofactor.

It carries out the reaction isopentenyl diphosphate + 2 oxidized [2Fe-2S]-[ferredoxin] + H2O = (2E)-4-hydroxy-3-methylbut-2-enyl diphosphate + 2 reduced [2Fe-2S]-[ferredoxin] + 2 H(+). It catalyses the reaction dimethylallyl diphosphate + 2 oxidized [2Fe-2S]-[ferredoxin] + H2O = (2E)-4-hydroxy-3-methylbut-2-enyl diphosphate + 2 reduced [2Fe-2S]-[ferredoxin] + 2 H(+). It functions in the pathway isoprenoid biosynthesis; dimethylallyl diphosphate biosynthesis; dimethylallyl diphosphate from (2E)-4-hydroxy-3-methylbutenyl diphosphate: step 1/1. It participates in isoprenoid biosynthesis; isopentenyl diphosphate biosynthesis via DXP pathway; isopentenyl diphosphate from 1-deoxy-D-xylulose 5-phosphate: step 6/6. Functionally, catalyzes the conversion of 1-hydroxy-2-methyl-2-(E)-butenyl 4-diphosphate (HMBPP) into a mixture of isopentenyl diphosphate (IPP) and dimethylallyl diphosphate (DMAPP). Acts in the terminal step of the DOXP/MEP pathway for isoprenoid precursor biosynthesis. This Methylibium petroleiphilum (strain ATCC BAA-1232 / LMG 22953 / PM1) protein is 4-hydroxy-3-methylbut-2-enyl diphosphate reductase.